The following is a 149-amino-acid chain: Nucleoside diphosphate kinase (149 aa).

Lysine 9, phenylalanine 57, arginine 85, threonine 91, arginine 102, and asparagine 112 together coordinate ATP. The active-site Pros-phosphohistidine intermediate is the histidine 115.

Belongs to the NDK family. In terms of assembly, homotetramer. Mg(2+) is required as a cofactor.

It localises to the cytoplasm. The enzyme catalyses dZDP + ATP = dZTP + ADP. It catalyses the reaction a 2'-deoxyribonucleoside 5'-diphosphate + ATP = a 2'-deoxyribonucleoside 5'-triphosphate + ADP. It carries out the reaction a ribonucleoside 5'-diphosphate + ATP = a ribonucleoside 5'-triphosphate + ADP. It functions in the pathway purine metabolism. Major role in the synthesis of nucleoside triphosphates other than ATP. The ATP gamma phosphate is transferred to the NDP beta phosphate via a ping-pong mechanism, using a phosphorylated active-site intermediate. Its function is as follows. (Microbial infection) Catalyzes the phosphorylation of dZDP to dZTP, when the bacterium is infected by a phage that produces the substrate for the synthesis of dZTP (2- amino-2'-deoxyadenosine 5'-triphosphate), which is then used by the phage as a DNA polymerase substrate. The polypeptide is Nucleoside diphosphate kinase (Synechococcus elongatus (strain ATCC 33912 / PCC 7942 / FACHB-805) (Anacystis nidulans R2)).